A 333-amino-acid chain; its full sequence is Glycogenin-1 (333 aa).

Residue Thr-2 is modified to N-acetylthreonine. Leu-9, Thr-11, Asn-12, and Tyr-15 together coordinate UDP. Leu-9, Thr-11, Asn-12, and Tyr-15 together coordinate UDP-alpha-D-glucose. Ser-44 is modified (phosphoserine). Position 77 (Arg-77) interacts with UDP. Residues Arg-77, Lys-86, Asp-102, Ala-103, Asp-104, Asn-133, Ser-134, Asp-160, Asp-163, and Gln-164 each contribute to the UDP-alpha-D-glucose site. Asp-102, Ala-103, and Asp-104 together coordinate UDP. Residue Asp-102 participates in Mn(2+) binding. Residue Asp-104 participates in Mn(2+) binding. Tyr-195 carries an O-linked (Glc...) tyrosine glycan. The UDP site is built by His-212, Gly-215, and Lys-218. His-212 serves as a coordination point for Mn(2+). UDP-alpha-D-glucose contacts are provided by Gly-215 and Lys-218. Residues 284-316 (SDLSFGEAPAAPQPSMSSEERKERWEQGQADYM) form an interaction with GYS1 region. The disordered stretch occupies residues 290-316 (EAPAAPQPSMSSEERKERWEQGQADYM).

The protein belongs to the glycosyltransferase 8 family. Glycogenin subfamily. Part of the GYS1-GYG1 complex, a heterooctamer composed of a tetramer of GYS1 and 2 dimers of GYG1, where each GYS1 protomer binds to one GYG1 subunit (via GYG1 C-terminus); the GYS1 tetramer may dissociate from GYG1 dimers to continue glycogen polymerization on its own. May also form a heterooctamer complex with GYS2. The cofactor is Mn(2+). Post-translationally, self-glycosylated by the transfer of glucose residues from UDP-glucose to itself, forming an alpha-1,4-glycan of around 10 residues attached to Tyr-195. In terms of processing, phosphorylated. As to expression, skeletal muscle, heart, to a lesser extent in kidney, lung and brain.

The protein resides in the cytoplasm. The protein localises to the nucleus. The catalysed reaction is L-tyrosyl-[glycogenin] + UDP-alpha-D-glucose = alpha-D-glucosyl-L-tyrosyl-[glycogenin] + UDP + H(+). It catalyses the reaction [1,4-alpha-D-glucosyl](n)-L-tyrosyl-[glycogenin] + UDP-alpha-D-glucose = [1,4-alpha-D-glucosyl](n+1)-L-tyrosyl-[glycogenin] + UDP + H(+). Its pathway is glycan biosynthesis; glycogen biosynthesis. Glycogenin participates in the glycogen biosynthetic process along with glycogen synthase and glycogen branching enzyme. It catalyzes the formation of a short alpha (1,4)-glucosyl chain covalently attached via a glucose 1-O-tyrosyl linkage to internal tyrosine residues and these chains act as primers for the elongation reaction catalyzed by glycogen synthase. The polypeptide is Glycogenin-1 (Mus musculus (Mouse)).